Here is a 458-residue protein sequence, read N- to C-terminus: Flavohemoprotein (458 aa).

The region spanning 2–158 is the Globin domain; that stretch reads PLSEDTIKAV…LAHLFVRREE (157 aa). Position 107 (histidine 107) interacts with heme b. Residues tyrosine 117 and glutamate 157 each act as charge relay system in the active site. Residues 169-457 are reductase; the sequence is GGWRQTRSFR…FEMFGPFKPL (289 aa). The region spanning 172–279 is the FAD-binding FR-type domain; that stretch reads RQTRSFRVEE…APPYGDFFLE (108 aa). FAD is bound by residues tyrosine 211 and 228 to 231; that span reads RQYS. Residue 320–325 coordinates NADP(+); that stretch reads GIGQTP. 450 to 453 lines the FAD pocket; sequence MFGP.

The protein belongs to the globin family. Two-domain flavohemoproteins subfamily. This sequence in the C-terminal section; belongs to the flavoprotein pyridine nucleotide cytochrome reductase family. As to quaternary structure, monomer. Heme b serves as cofactor. FAD is required as a cofactor.

It carries out the reaction 2 nitric oxide + NADPH + 2 O2 = 2 nitrate + NADP(+) + H(+). The enzyme catalyses 2 nitric oxide + NADH + 2 O2 = 2 nitrate + NAD(+) + H(+). In terms of biological role, flavohemoprotein involved in nitric oxide (NO) detoxification in an aerobic process, termed nitric oxide dioxygenase (NOD) reaction that utilizes O(2) and NAD(P)H to convert NO to nitrate, which protects the protozoan parasite from various noxious nitrogen compounds. Therefore, plays a central role in the inducible response to nitrosative stress. May also be involved in O(2) detoxification. The chain is Flavohemoprotein (hmpA) from Giardia intestinalis (strain ATCC 50581 / GS clone H7) (Giardia lamblia).